The chain runs to 438 residues: Lipid-A-disaccharide synthase (438 aa).

This sequence belongs to the LpxB family.

It carries out the reaction a lipid X + a UDP-2-N,3-O-bis[(3R)-3-hydroxyacyl]-alpha-D-glucosamine = a lipid A disaccharide + UDP + H(+). It participates in bacterial outer membrane biogenesis; LPS lipid A biosynthesis. Condensation of UDP-2,3-diacylglucosamine and 2,3-diacylglucosamine-1-phosphate to form lipid A disaccharide, a precursor of lipid A, a phosphorylated glycolipid that anchors the lipopolysaccharide to the outer membrane of the cell. The chain is Lipid-A-disaccharide synthase from Xanthomonas campestris pv. campestris (strain 8004).